Reading from the N-terminus, the 482-residue chain is UDP-N-acetylmuramate--L-alanine ligase (482 aa).

115–121 (GTHGKTT) is an ATP binding site.

The protein belongs to the MurCDEF family.

The protein localises to the cytoplasm. It carries out the reaction UDP-N-acetyl-alpha-D-muramate + L-alanine + ATP = UDP-N-acetyl-alpha-D-muramoyl-L-alanine + ADP + phosphate + H(+). It participates in cell wall biogenesis; peptidoglycan biosynthesis. In terms of biological role, cell wall formation. This is UDP-N-acetylmuramate--L-alanine ligase from Rhodospirillum centenum (strain ATCC 51521 / SW).